The following is a 223-amino-acid chain: Ion-translocating oxidoreductase complex subunit E (223 aa).

Helical transmembrane passes span 17 to 37, 40 to 60, 70 to 90, 94 to 114, 129 to 149, and 182 to 202; these read NGVL…GTAT, LGMG…VAMF, IPVY…GMNA, ELYK…LPLA, FLDG…IGAV, and WGIL…LMVV.

It belongs to the NqrDE/RnfAE family. In terms of assembly, the complex is composed of six subunits: RnfA, RnfB, RnfC, RnfD, RnfE and RnfG.

It localises to the cell inner membrane. Part of a membrane-bound complex that couples electron transfer with translocation of ions across the membrane. This chain is Ion-translocating oxidoreductase complex subunit E, found in Paramagnetospirillum magneticum (strain ATCC 700264 / AMB-1) (Magnetospirillum magneticum).